Consider the following 280-residue polypeptide: DegV domain-containing protein spyM18_1709 (280 aa).

In terms of domain architecture, DegV spans 3–280 (WKIVTDSGCD…DGGLLMGYEI (278 aa)). Hexadecanoate is bound by residues Ser-63 and Ser-91.

In terms of biological role, may bind long-chain fatty acids, such as palmitate, and may play a role in lipid transport or fatty acid metabolism. The protein is DegV domain-containing protein spyM18_1709 of Streptococcus pyogenes serotype M18 (strain MGAS8232).